The sequence spans 452 residues: MPQACVIGLGRSGIAAARVLHRDGWQVTVFDQADNDQLRHMGQPLVQEGISLKLGDRLDPVKEAWPERIVVSPGVPWDIPLLVAAREKGVEVTGELELAWQYLHAVPWVGITGTNGKTTTTSLVQAIFQKAGLNAPACGNIGYAACELVLQNQNYDWIVAEISSYQIESSPTLAPQIGLWTTFTPDHLSRHKTLENYFNIKASLLSRSAIQVLNGDDPHLHSHGPNLYPQAHWTSTQGANHLAGLCDPKQGVYLQDNWVNAFGELIAPINLFKMPGQHNQQNLLMAIAAARLAGIDKKAITETLLTFTGVPHRLEPICTINGVQFINDSKATNYDAAEVGLSSMKGPTILIAGGEAKEGDDQAWLAQIRQKAVAVLLIGDAAPNFATRLKAVGYENYEIVETMANAVQRGLELASKNNASAVLLSPACASFDQYNSFEERGEDFRACCLGLV.

113–119 (GTNGKTT) contributes to the ATP binding site.

The protein belongs to the MurCDEF family.

Its subcellular location is the cytoplasm. It carries out the reaction UDP-N-acetyl-alpha-D-muramoyl-L-alanine + D-glutamate + ATP = UDP-N-acetyl-alpha-D-muramoyl-L-alanyl-D-glutamate + ADP + phosphate + H(+). The protein operates within cell wall biogenesis; peptidoglycan biosynthesis. Its function is as follows. Cell wall formation. Catalyzes the addition of glutamate to the nucleotide precursor UDP-N-acetylmuramoyl-L-alanine (UMA). The protein is UDP-N-acetylmuramoylalanine--D-glutamate ligase (murD) of Synechocystis sp. (strain ATCC 27184 / PCC 6803 / Kazusa).